A 386-amino-acid polypeptide reads, in one-letter code: 2-isopropylmalate synthase (386 aa).

A Pyruvate carboxyltransferase domain is found at 15–269 (IRIFDTTLRD…ETNVKTWKLY (255 aa)). 4 residues coordinate a divalent metal cation: D24, H207, H209, and N243.

This sequence belongs to the alpha-IPM synthase/homocitrate synthase family. Homodimer. It depends on a divalent metal cation as a cofactor.

The enzyme catalyses 3-methyl-2-oxobutanoate + acetyl-CoA + H2O = (2S)-2-isopropylmalate + CoA + H(+). Its pathway is amino-acid biosynthesis; L-leucine biosynthesis; L-leucine from 3-methyl-2-oxobutanoate: step 1/4. Functionally, catalyzes the condensation of the acetyl group of acetyl-CoA with 3-methyl-2-oxobutanoate (2-oxoisovalerate) to form 3-carboxy-3-hydroxy-4-methylpentanoate (2-isopropylmalate). Carries out the first step of the leucine biosynthesis pathway. This chain is 2-isopropylmalate synthase (leuA), found in Saccharolobus solfataricus (strain ATCC 35092 / DSM 1617 / JCM 11322 / P2) (Sulfolobus solfataricus).